The chain runs to 88 residues: Large ribosomal subunit protein eL31 (88 aa).

It belongs to the eukaryotic ribosomal protein eL31 family.

This is Large ribosomal subunit protein eL31 from Methanoregula boonei (strain DSM 21154 / JCM 14090 / 6A8).